A 224-amino-acid polypeptide reads, in one-letter code: 7-cyano-7-deazaguanine synthase (224 aa).

8–18 serves as a coordination point for ATP; the sequence is LSGGMDSAAVI. Cys-186, Cys-196, Cys-199, and Cys-202 together coordinate Zn(2+).

This sequence belongs to the QueC family. It depends on Zn(2+) as a cofactor.

The enzyme catalyses 7-carboxy-7-deazaguanine + NH4(+) + ATP = 7-cyano-7-deazaguanine + ADP + phosphate + H2O + H(+). Its pathway is purine metabolism; 7-cyano-7-deazaguanine biosynthesis. In terms of biological role, catalyzes the ATP-dependent conversion of 7-carboxy-7-deazaguanine (CDG) to 7-cyano-7-deazaguanine (preQ(0)). The polypeptide is 7-cyano-7-deazaguanine synthase (Xanthomonas axonopodis pv. citri (strain 306)).